Consider the following 596-residue polypeptide: Protein kinase C iota type (596 aa).

Polar residues predominate over residues 1–12 (MPTQRDSSTMSH). The disordered stretch occupies residues 1–23 (MPTQRDSSTMSHTVAGGGSGDHS). Pro-2 bears the N-acetylproline mark. The interval 2–28 (PTQRDSSTMSHTVAGGGSGDHSHQVRV) is required for interaction with RAB2. The segment at 2 to 253 (PTQRDSSTMS…KASSSLGLQD (252 aa)) is regulatory domain. At Thr-3 the chain carries Phosphothreonine. A phosphoserine mark is found at Ser-7 and Ser-8. Phosphothreonine is present on Thr-9. The region spanning 25-108 (QVRVKAYYRG…SELLIHVFPC (84 aa)) is the PB1 domain. An interaction with PARD6A region spans residues 72–91 (DEEGDPCTVSSQLELEEAFR). The short motif at 125-134 (YRRGARRWRK) is the Pseudosubstrate element. The segment at 140-190 (GHTFQAKRFNRRAHCAICTDRIWGLGRQGYKCINCKLLVHKKCHKLVTIEC) adopts a Phorbol-ester/DAG-type zinc-finger fold. The segment at 221-246 (PSSHESLDQVGEEKEAMNTRESGKAS) is disordered. The segment covering 225 to 243 (ESLDQVGEEKEAMNTRESG) has biased composition (basic and acidic residues). The Protein kinase domain maps to 254–522 (FDLLRVIGRG…FADIQGHPFF (269 aa)). An ATP-binding site is contributed by 260-268 (IGRGSYAKV). Phosphotyrosine; by SRC is present on residues Tyr-265 and Tyr-280. Lys-283 lines the ATP pocket. Position 334 is a phosphotyrosine; by SRC (Tyr-334). The active-site Proton acceptor is the Asp-378. At Thr-412 the chain carries Phosphothreonine; by PDPK1. The 72-residue stretch at 523–594 (RNVDWDMMEQ…INPLLMSAEE (72 aa)) folds into the AGC-kinase C-terminal domain. Residue Thr-564 is modified to Phosphothreonine.

This sequence belongs to the protein kinase superfamily. AGC Ser/Thr protein kinase family. PKC subfamily. In terms of assembly, forms a complex with SQSTM1 and MP2K5. Interacts directly with SQSTM1. Interacts with IKBKB. Interacts with PARD6A, PARD6B and PARD6G. Part of a quaternary complex containing aPKC, PARD3, a PARD6 protein (PARD6A, PARD6B or PARD6G) and a GTPase protein (CDC42 or RAC1). Part of a complex with LLGL1 and PARD6B. Interacts with ADAP1/CENTA1. Interaction with SMG1, through the ZN-finger domain, activates the kinase activity. Interacts with CDK7. Forms a complex with RAB2A and GAPDH involved in recruitment onto the membrane of vesicular tubular clusters (VTCs). Interacts with ECT2 ('Thr-359' phosphorylated form). Interacts with VAMP2. Interacts with WDFY2 (via WD repeats 1-3). In terms of processing, phosphorylation at Thr-412 in the activation loop is not mandatory for activation. Upon neuronal growth factor (NGF) stimulation, phosphorylated by SRC at Tyr-265, Tyr-280 and Tyr-334. Phosphorylation at Tyr-265 facilitates binding to KPNB1/importin-beta regulating entry of PRKCI into the nucleus. Phosphorylation on Tyr-334 is important for NF-kappa-B stimulation. Phosphorylated at Thr-564 during the initial phase of long term potentiation.

It localises to the cytoplasm. Its subcellular location is the membrane. The protein localises to the endosome. It is found in the nucleus. It catalyses the reaction L-seryl-[protein] + ATP = O-phospho-L-seryl-[protein] + ADP + H(+). The catalysed reaction is L-threonyl-[protein] + ATP = O-phospho-L-threonyl-[protein] + ADP + H(+). Atypical PKCs (PRKCI and PRKCZ) exhibit an elevated basal enzymatic activity (that may be due to the interaction with SMG1 or SQSTM1) and are not regulated by diacylglycerol, phosphatidylserine, phorbol esters or calcium ions. Two specific sites, Thr-412 (activation loop of the kinase domain) and Thr-564 (turn motif), need to be phosphorylated for its full activation. Might also be a target for novel lipid activators that are elevated during nutrient-stimulated insulin secretion. Functionally, calcium- and diacylglycerol-independent serine/ threonine-protein kinase that plays a general protective role against apoptotic stimuli, is involved in NF-kappa-B activation, cell survival, differentiation and polarity, and contributes to the regulation of microtubule dynamics in the early secretory pathway. Is necessary for BCR-ABL oncogene-mediated resistance to apoptotic drug in leukemia cells, protecting leukemia cells against drug-induced apoptosis. In cultured neurons, prevents amyloid beta protein-induced apoptosis by interrupting cell death process at a very early step. In glioblastoma cells, may function downstream of phosphatidylinositol 3-kinase (PI(3)K) and PDPK1 in the promotion of cell survival by phosphorylating and inhibiting the pro-apoptotic factor BAD. Can form a protein complex in non-small cell lung cancer (NSCLC) cells with PARD6A and ECT2 and regulate ECT2 oncogenic activity by phosphorylation, which in turn promotes transformed growth and invasion. In response to nerve growth factor (NGF), acts downstream of SRC to phosphorylate and activate IRAK1, allowing the subsequent activation of NF-kappa-B and neuronal cell survival. Functions in the organization of the apical domain in epithelial cells by phosphorylating EZR. This step is crucial for activation and normal distribution of EZR at the early stages of intestinal epithelial cell differentiation. Forms a protein complex with LLGL1 and PARD6B independently of PARD3 to regulate epithelial cell polarity. Plays a role in microtubule dynamics in the early secretory pathway through interaction with RAB2A and GAPDH and recruitment to vesicular tubular clusters (VTCs). In human coronary artery endothelial cells (HCAEC), is activated by saturated fatty acids and mediates lipid-induced apoptosis. Involved in early synaptic long term potentiation phase in CA1 hippocampal cells and short term memory formation. The polypeptide is Protein kinase C iota type (PRKCI) (Pongo abelii (Sumatran orangutan)).